Reading from the N-terminus, the 198-residue chain is Holliday junction branch migration complex subunit RuvA (198 aa).

A domain I region spans residues 1 to 63 (MYDYIKGQLT…EDAHLLFGFH (63 aa)). The tract at residues 64–142 (TKDEKDVFLK…EAPQETGNTK (79 aa)) is domain II. Residues 143-147 (ARSNK) are flexible linker. A domain III region spans residues 148–198 (AGNTQLDEAIEALLALGYKATELKKIRAFFEGTSETAEQYIKSALKLLMKG).

This sequence belongs to the RuvA family. Homotetramer. Forms an RuvA(8)-RuvB(12)-Holliday junction (HJ) complex. HJ DNA is sandwiched between 2 RuvA tetramers; dsDNA enters through RuvA and exits via RuvB. An RuvB hexamer assembles on each DNA strand where it exits the tetramer. Each RuvB hexamer is contacted by two RuvA subunits (via domain III) on 2 adjacent RuvB subunits; this complex drives branch migration. In the full resolvosome a probable DNA-RuvA(4)-RuvB(12)-RuvC(2) complex forms which resolves the HJ.

The protein resides in the cytoplasm. In terms of biological role, the RuvA-RuvB-RuvC complex processes Holliday junction (HJ) DNA during genetic recombination and DNA repair, while the RuvA-RuvB complex plays an important role in the rescue of blocked DNA replication forks via replication fork reversal (RFR). RuvA specifically binds to HJ cruciform DNA, conferring on it an open structure. The RuvB hexamer acts as an ATP-dependent pump, pulling dsDNA into and through the RuvAB complex. HJ branch migration allows RuvC to scan DNA until it finds its consensus sequence, where it cleaves and resolves the cruciform DNA. The polypeptide is Holliday junction branch migration complex subunit RuvA (Streptococcus pyogenes serotype M18 (strain MGAS8232)).